We begin with the raw amino-acid sequence, 698 residues long: Elongation factor G (698 aa).

In terms of domain architecture, tr-type G spans 8–284 (ANVRNIGIMA…AVVDFLPSPL (277 aa)). Residues 17–24 (AHIDAGKT), 81–85 (DTPGH), and 135–138 (NKLD) contribute to the GTP site. Positions 289–309 (IEGTGTDGETPLQRKPSTSEP) are disordered.

The protein belongs to the TRAFAC class translation factor GTPase superfamily. Classic translation factor GTPase family. EF-G/EF-2 subfamily.

It is found in the cytoplasm. Catalyzes the GTP-dependent ribosomal translocation step during translation elongation. During this step, the ribosome changes from the pre-translocational (PRE) to the post-translocational (POST) state as the newly formed A-site-bound peptidyl-tRNA and P-site-bound deacylated tRNA move to the P and E sites, respectively. Catalyzes the coordinated movement of the two tRNA molecules, the mRNA and conformational changes in the ribosome. This Salinispora arenicola (strain CNS-205) protein is Elongation factor G.